The chain runs to 1035 residues: MERARKLANRAILKRLVSQSKQSRSNEIPSSSLYRPSRYVSSLSPYTFQARNNAKSFNTQQARSISVEALKPSDTFPRRHNSATPEEQTKMAEFCGFQSLDALIDATVPQSIRSESMKLPKFDSGLTESQMIEHMQNLASKNKVFKSYIGMGYYNTYVPPVILRNLLENPAWYTQYTPYQAEISQGRLESLLNYQTMITDLTGLPMSNASLLDEGTAAAEAMAMCNNILKGKKKTFLIASNCHPQTIDICKTRADGFDLKVVTVDLKDIDYKSGDVCGVLVQYPGTEGEILDYGEFIKNAHAHGVKVVMASDLLALTMLKPPGELGADIVVGSAQRFGVPMGYGGPHAAFLATSQEYKRMMPGRIIGLSVDSTGKPALRMAMQTREQHIRRDKATSNICTAQALLANMAAMYAVYHGPEGLKTIGQRVHGLAGTFSAGLKKLGTVEVQDLPFFDTVKVKCSDAKAIADVANKNDINLRIVDNNTITVSFDETTTLEDVDDLFKVFALGKPVPFTAQSIAQEVENLIPSGLTRETPFLTHQIFNSYHTEHELLRYLHKLQSKDLSLCHSMIPLGSCTMKLNATTEMMPVTWPSFANIHPFAPTEQAAGYQEMFDDLGALLCTITGFDSFSLQPNAGAAGEYAGLMVIRAYHMSRGDHHRNVCIIPVSAHGTNPASAAMCGMKIVAVGTDAKGNINIEELRKAAEANKDNLAALMVTYPSTHGVYEEGIDEICKIIHDNGGQVYMDGANMNAQVGLTSPGFIGADVCHLNLHKTFCIPHGGGGPGMGPIGVKKHLAPYLPSHPVVPTGGIPSPDKSEPLGAISAAPWGSALILPISYTYIAMMGSKGLTDASKIAILSANYMAKRLEKHYPVLFRGVNGTCAHEFIIDLRGFKNTAGIEPEDVAKRLIDYGFHGPTMSWPVPGTLMIEPTESESKAELDRFCDALISIREEIAQIEKGNVDINNNVLKGAPHPPSMLMADAWTKPYSREYAAYPAPWLRSAKFWPTTGRVDNVYGDRNLICTLLPVSEMAEEKAATA.

The N-terminal 64 residues, 1–64 (MERARKLANR…KSFNTQQARS (64 aa)), are a transit peptide targeting the mitochondrion. Lys-771 is modified (N6-(pyridoxal phosphate)lysine).

This sequence belongs to the GcvP family. Homodimer. The glycine cleavage system is composed of four proteins: P, T, L and H. Pyridoxal 5'-phosphate serves as cofactor.

It is found in the mitochondrion. The catalysed reaction is N(6)-[(R)-lipoyl]-L-lysyl-[glycine-cleavage complex H protein] + glycine + H(+) = N(6)-[(R)-S(8)-aminomethyldihydrolipoyl]-L-lysyl-[glycine-cleavage complex H protein] + CO2. Functionally, the glycine cleavage system catalyzes the degradation of glycine. The P protein binds the alpha-amino group of glycine through its pyridoxal phosphate cofactor; CO(2) is released and the remaining methylamine moiety is then transferred to the lipoamide cofactor of the H protein. The polypeptide is Glycine dehydrogenase (decarboxylating), mitochondrial (GDCSP) (Solanum tuberosum (Potato)).